Consider the following 461-residue polypeptide: Cysteine--tRNA ligase (461 aa).

Cys-30 is a Zn(2+) binding site. The short motif at 32 to 42 is the 'HIGH' region element; that stretch reads PTVYSYAHIGN. Zn(2+) contacts are provided by Cys-212, His-237, and Glu-241. The short motif at 270–274 is the 'KMSKS' region element; it reads KMSKS. Lys-273 provides a ligand contact to ATP.

It belongs to the class-I aminoacyl-tRNA synthetase family. Monomer. The cofactor is Zn(2+).

Its subcellular location is the cytoplasm. The enzyme catalyses tRNA(Cys) + L-cysteine + ATP = L-cysteinyl-tRNA(Cys) + AMP + diphosphate. This Maricaulis maris (strain MCS10) (Caulobacter maris) protein is Cysteine--tRNA ligase.